Here is a 217-residue protein sequence, read N- to C-terminus: Ribonuclease HII (217 aa).

Residues 12-201 (DLVAGVDEVG…VRTAHEARAA (190 aa)) form the RNase H type-2 domain. D18, E19, and D110 together coordinate a divalent metal cation.

This sequence belongs to the RNase HII family. Requires Mn(2+) as cofactor. Mg(2+) serves as cofactor.

Its subcellular location is the cytoplasm. It catalyses the reaction Endonucleolytic cleavage to 5'-phosphomonoester.. Functionally, endonuclease that specifically degrades the RNA of RNA-DNA hybrids. The protein is Ribonuclease HII of Pseudomonas syringae pv. tomato (strain ATCC BAA-871 / DC3000).